Consider the following 267-residue polypeptide: Adenosine 5'-phosphosulfate reductase (267 aa).

Residues 1 to 29 form a disordered region; that stretch reads MPPFATIPATERNSAAQHQDPSPMSQPFD. Residues 11 to 25 are compositionally biased toward polar residues; sequence ERNSAAQHQDPSPMS. The [4Fe-4S] cluster site is built by Cys139, Cys140, Cys228, and Cys231. The active-site Nucleophile; cysteine thiosulfonate intermediate is Cys256.

The protein belongs to the PAPS reductase family. CysH subfamily. It depends on [4Fe-4S] cluster as a cofactor.

Its subcellular location is the cytoplasm. It carries out the reaction [thioredoxin]-disulfide + sulfite + AMP + 2 H(+) = adenosine 5'-phosphosulfate + [thioredoxin]-dithiol. The protein operates within sulfur metabolism; hydrogen sulfide biosynthesis; sulfite from sulfate. Functionally, catalyzes the formation of sulfite from adenosine 5'-phosphosulfate (APS) using thioredoxin as an electron donor. The chain is Adenosine 5'-phosphosulfate reductase from Pseudomonas aeruginosa (strain LESB58).